Consider the following 312-residue polypeptide: MMKSNQSTVSEFILLGLPIQPEDQAVYFALFLAMYLTTVLGNLLIILLIRLDSHLHTPMYFFLSHLAFTDISFSSVTAPKMLMNMLTHSQSISHAGCVSQIYFFLLFGCIDNFLLTSMAYDRYVAICHPLHYTTIMSQSLCVLLVMVSWAFSSSNGLVHTLLFARLSLFRDNTVHHFFCDLSALLKLSSSDTTINELVILTLAVVVITVPFICILVSYGHIGATILRTPSIKGICKALSTCGSHLCVVSLYYGAIIGLYFFPSSNNTNDKDVIVAVLYTVVTPMLNPFIYSLRNRDINGALRKTLSRRLCSH.

7 helical membrane passes run 29–49 (ALFL…ILLI), 58–78 (PMYF…SVTA), 95–115 (AGCV…NFLL), 143–163 (LLVM…TLLF), 197–217 (LVIL…ILVS), 241–261 (CGSH…LYFF), and 272–292 (VIVA…IYSL).

It belongs to the G-protein coupled receptor 1 family.

It localises to the cell membrane. Odorant receptor. Activated by (+) and (-)-carvone. The chain is Olfactory receptor 1J21 from Mus musculus (Mouse).